The sequence spans 971 residues: Putative helicase 184R (971 aa).

A disordered region spans residues 506 to 528; that stretch reads GYEPSDSGFGFDDDDSASTSGGK. An SF3 helicase domain is found at 624–807; it reads PKVIKMLNFF…FKDSIDDISL (184 aa). Residue 668 to 675 participates in ATP binding; the sequence is GEGDNGKS.

Belongs to the IIV-6 184R family.

In Acheta domesticus (House cricket), this protein is Putative helicase 184R.